A 161-amino-acid chain; its full sequence is Cytochrome b6-f complex subunit 4 (161 aa).

3 helical membrane-spanning segments follow: residues L37–V57, L96–E116, and S132–I152.

The protein belongs to the cytochrome b family. PetD subfamily. In terms of assembly, the 4 large subunits of the cytochrome b6-f complex are cytochrome b6, subunit IV (17 kDa polypeptide, PetD), cytochrome f and the Rieske protein, while the 4 small subunits are PetG, PetL, PetM and PetN. The complex functions as a dimer.

It is found in the cellular thylakoid membrane. Functionally, component of the cytochrome b6-f complex, which mediates electron transfer between photosystem II (PSII) and photosystem I (PSI), cyclic electron flow around PSI, and state transitions. The sequence is that of Cytochrome b6-f complex subunit 4 from Acaryochloris marina (strain MBIC 11017).